The sequence spans 382 residues: MAALDPITPAGGGTWRFPANEPLRLDSGGVIEGLEIAYQTYGQLNADKSNAVLICHALTGDQHVASPHPTTGKPGWWQRLVGPGKPLDPARHFIICSNVIGGCMGSTGPASINPATGKTYGLSFPVITIADMVRAQAMLVSALGVETLFAVVGGSMGGMQVQQWAVDYPERMFSAVVLASASRHSAQNIAFHEVGRQAIMADPDWRGGAYAEHGVRPEKGLAVARMAAHITYLSEPALQRKFGRELQRDGLSWGFDADFQVESYLRHQGSSFVDRFDANSYLYITRAMDYFDIAASHGGVLAKAFTRARNVRFCVLSFSSDWLYPTAENRHLVRALTAAGARAAFAEIESDKGHDAFLLDEPVMDAALEGFLASAERDRGLV.

In terms of domain architecture, AB hydrolase-1 spans 50–360; sequence NAVLICHALT…DKGHDAFLLD (311 aa). The active-site Nucleophile is the Ser155. Arg225 serves as a coordination point for substrate. Catalysis depends on residues Asp321 and His354. Residue Asp355 coordinates substrate.

This sequence belongs to the AB hydrolase superfamily. MetX family. As to quaternary structure, homodimer.

Its subcellular location is the cytoplasm. The enzyme catalyses L-homoserine + acetyl-CoA = O-acetyl-L-homoserine + CoA. It functions in the pathway amino-acid biosynthesis; L-methionine biosynthesis via de novo pathway; O-acetyl-L-homoserine from L-homoserine: step 1/1. In terms of biological role, transfers an acetyl group from acetyl-CoA to L-homoserine, forming acetyl-L-homoserine. The polypeptide is Homoserine O-acetyltransferase (Caulobacter vibrioides (strain ATCC 19089 / CIP 103742 / CB 15) (Caulobacter crescentus)).